A 172-amino-acid polypeptide reads, in one-letter code: Transcriptional activator protein (172 aa).

Positions 56-71 match the Nuclear localization signal motif; the sequence is KAQHRIAKHKAIRRRR. A zinc finger lies at 76–93; that stretch reads CGCSIFYHIKCADHGFTH. Residues 119 to 172 are disordered; sequence DHAGGRSSIHTDKDIPHPSQVQSQPQESTGSPQSIPELPSLDDIDSSFWDDIFK. A compositionally biased stretch (polar residues) spans 137-152; that stretch reads SQVQSQPQESTGSPQS. The transactivation stretch occupies residues 158–172; it reads SLDDIDSSFWDDIFK.

The protein belongs to the geminiviridae transcriptional activator protein family. In terms of assembly, monomer. Homodimer. Homooligomer. Self-interaction correlates with nuclear localization and efficient activation of transcription. Monomers suppress local silencing by interacting with and inactivating host adenosine kinase 2 (ADK2) in the cytoplasm. Interacts with and inhibits host SNF1 kinase. Binds to ssDNA. Phosphorylated.

Its subcellular location is the host nucleus. It localises to the host cytoplasm. Strong activator of the late viral genes promoters. Enhances the expression of the capsid protein and nuclear shuttle protein. Acts as a suppressor of RNA-mediated gene silencing, also known as post-transcriptional gene silencing (PTGS), a mechanism of plant viral defense that limits the accumulation of viral RNAs. Suppresses the host RNA silencing by inhibiting adenosine kinase 2 (ADK2), a kinase involved in a general methylation pathway. Also suppresses the host basal defense by interacting with and inhibiting SNF1 kinase, a key regulator of cell metabolism implicated in innate antiviral defense. Determines pathogenicity. This Bean golden yellow mosaic virus (isolate Puerto Rico-Japan) (BGYMV) protein is Transcriptional activator protein.